A 280-amino-acid polypeptide reads, in one-letter code: 2,3,4,5-tetrahydropyridine-2,6-dicarboxylate N-succinyltransferase (280 aa).

The substrate site is built by Arg107 and Asp144.

Belongs to the transferase hexapeptide repeat family. Homotrimer.

The protein resides in the cytoplasm. It carries out the reaction (S)-2,3,4,5-tetrahydrodipicolinate + succinyl-CoA + H2O = (S)-2-succinylamino-6-oxoheptanedioate + CoA. It functions in the pathway amino-acid biosynthesis; L-lysine biosynthesis via DAP pathway; LL-2,6-diaminopimelate from (S)-tetrahydrodipicolinate (succinylase route): step 1/3. The protein is 2,3,4,5-tetrahydropyridine-2,6-dicarboxylate N-succinyltransferase of Paramagnetospirillum magneticum (strain ATCC 700264 / AMB-1) (Magnetospirillum magneticum).